A 443-amino-acid chain; its full sequence is MLLDAGAQYPAIGVTTFGSSRHHSAGDVTDREVALGINPFADGMGAFKLNPSSHDLASGQTAFTSQAPGYAAAALGHHHHPGHVSSYSSAAFNSTRDFLFRNRGFGEAASAQHSLFASAAGGFPGPHGPHADTTGHLIFPGLHEQAASHASPNVVNGQMRLGFSGDMYGRPDQYGQVTSPRSEHYASSQLHGYGPMNMNMAAHHGAGAFFRYMRQPIKQELICKWIEPEQLANPKKSCNKTFSTMHELVTHVTVEHVGGPEQSNHICVWEECPREGKPFKAKYKLINHIRVHTGEKPFPCPFPGCGKVFARSENLKIHKRTHTGEKPFKCEFEGCDRRFANSSDRKKHMHVHTSDKPYLCKMCDKSYTHPSSLRKHMKVHEASSQGSQPSPAASSGYESSTPPTIVSPSAENQSTSSLSPSSSAVHHTSNHSTLSSNFNEWYV.

A C2H2-type 1; atypical zinc finger spans residues 221–256 (LICKWIEPEQLANPKKSCNKTFSTMHELVTHVTVEH). The segment at 265–292 (HICVWEECPREGKPFKAKYKLINHIRVH) adopts a C2H2-type 2; atypical zinc-finger fold. 3 C2H2-type zinc fingers span residues 298 to 322 (FPCP…KRTH), 328 to 352 (FKCE…MHVH), and 358 to 380 (YLCK…MKVH). A disordered region spans residues 371-433 (SSLRKHMKVH…AVHHTSNHST (63 aa)). Over residues 383-396 (SSQGSQPSPAASSG) the composition is skewed to low complexity. Positions 397–413 (YESSTPPTIVSPSAENQ) are enriched in polar residues. The negatively regulates transcriptional activity stretch occupies residues 408–443 (PSAENQSTSSLSPSSSAVHHTSNHSTLSSNFNEWYV). The segment covering 414-433 (STSSLSPSSSAVHHTSNHST) has biased composition (low complexity).

The protein belongs to the GLI C2H2-type zinc-finger protein family. As to expression, during early gastrula stages, widely expressed in the dorsal ectoderm. At mid-gastrula, expressed throughout the presumptive neural plate and at late gastrula, expression gradually diminishes in the dorsal midline and increases in the anterior folds. By early neurula stage, expression becomes restricted to the lateral edges of the neural plate, corresponding to the presumptive dorsal neural plate and neural crest, and in flanking ectoderm. In early tailbud stages (stages 22-23), expressed in the dorsal forebrain, midbrain and hindbrain. Subsequently expressed in the telencephalon and at the diencephalon/mesencephalon boundary. In the spinal cord, expression is restricted to the dorsal most region including the roof plate. Also expressed in the somites but not in eye vesicles. At larval stages, expressed mainly in the dorsal neural tube throughout its anteroposterior axis.

It localises to the nucleus. It is found in the cytoplasm. Its function is as follows. Transcriptional activator that induces expression of multiple genes including pax3, en2, snai2/slug, feb and a subset of wnt genes. Has multiple key roles in the regulation of neural induction and neurogenesis: acts as a neural competence factor, sensitizing the presumptive neuroectoderm to respond to subsequent neuralizing signals. Promotes both preplacodal cell fates and neural crest cell fates, two of the cell populations that arise from the neural plate border. Cooperates with pax3 in concert with wnt signaling to determine neural crest fate. Synergizes with the bmp-inhibitor noggin/nog and acts through the wnt pathway to induce expression of en2. May bind to the minimal GLI-consensus sequence 5'-TGGGTGGTC-3'. In Xenopus laevis (African clawed frog), this protein is Zinc finger protein ZIC 1 (zic1).